The following is a 37-amino-acid chain: uncharacterized protein (37 aa).

This is an uncharacterized protein from Bacillus caldotenax.